We begin with the raw amino-acid sequence, 66 residues long: Potassium channel toxin alpha-KTx 30.1 (66 aa).

Residues 1–24 (MNTGFFFFVIMATGLVLTFDTIHA) form the signal peptide. Disulfide bonds link Cys-30–Cys-50, Cys-36–Cys-55, and Cys-40–Cys-57.

The protein belongs to the short scorpion toxin superfamily. Potassium channel inhibitor family. Alpha-KTx 30 subfamily. As to expression, expressed by the venom gland.

Its subcellular location is the secreted. Inhibits Kv1.3/KCNA3 channel (1 uM of the toxin inhibits currents by 64.1%). In Scorpiops margerisonae (Scorpion), this protein is Potassium channel toxin alpha-KTx 30.1.